Consider the following 307-residue polypeptide: Streptomycin 6-kinase (307 aa).

133 to 145 (LAGLLNRLHSVPA) contributes to the streptomycin binding site. The active-site Proton acceptor is the D201.

The protein belongs to the aminoglycoside phosphotransferase family.

It catalyses the reaction streptomycin + ATP = streptomycin 6-phosphate + ADP + H(+). In terms of biological role, the aminoglycoside phosphotransferases achieve inactivation of their antibiotic substrates by phosphorylation. The polypeptide is Streptomycin 6-kinase (aphD) (Streptomyces griseus).